The following is a 506-amino-acid chain: Glutamate--tRNA ligase (506 aa).

The 'HIGH' region motif lies at 21-31 (PSPTGIPHVGM). The short motif at 265 to 269 (KLSKR) is the 'KMSKS' region element. An ATP-binding site is contributed by Lys268.

It belongs to the class-I aminoacyl-tRNA synthetase family. Glutamate--tRNA ligase type 1 subfamily. Monomer.

It is found in the cytoplasm. The enzyme catalyses tRNA(Glu) + L-glutamate + ATP = L-glutamyl-tRNA(Glu) + AMP + diphosphate. Functionally, catalyzes the attachment of glutamate to tRNA(Glu) in a two-step reaction: glutamate is first activated by ATP to form Glu-AMP and then transferred to the acceptor end of tRNA(Glu). The sequence is that of Glutamate--tRNA ligase from Bifidobacterium adolescentis (strain ATCC 15703 / DSM 20083 / NCTC 11814 / E194a).